The chain runs to 154 residues: 6,7-dimethyl-8-ribityllumazine synthase (154 aa).

5-amino-6-(D-ribitylamino)uracil is bound by residues phenylalanine 22, 56-58 (SFE), and 81-83 (VLI). Position 86–87 (86–87 (ET)) interacts with (2S)-2-hydroxy-3-oxobutyl phosphate. Histidine 89 functions as the Proton donor in the catalytic mechanism. Position 114 (phenylalanine 114) interacts with 5-amino-6-(D-ribitylamino)uracil. Arginine 128 lines the (2S)-2-hydroxy-3-oxobutyl phosphate pocket.

Belongs to the DMRL synthase family.

The catalysed reaction is (2S)-2-hydroxy-3-oxobutyl phosphate + 5-amino-6-(D-ribitylamino)uracil = 6,7-dimethyl-8-(1-D-ribityl)lumazine + phosphate + 2 H2O + H(+). Its pathway is cofactor biosynthesis; riboflavin biosynthesis; riboflavin from 2-hydroxy-3-oxobutyl phosphate and 5-amino-6-(D-ribitylamino)uracil: step 1/2. Catalyzes the formation of 6,7-dimethyl-8-ribityllumazine by condensation of 5-amino-6-(D-ribitylamino)uracil with 3,4-dihydroxy-2-butanone 4-phosphate. This is the penultimate step in the biosynthesis of riboflavin. This is 6,7-dimethyl-8-ribityllumazine synthase from Chlamydia felis (strain Fe/C-56) (Chlamydophila felis).